Reading from the N-terminus, the 233-residue chain is Probable chemoreceptor glutamine deamidase CheD (233 aa).

Belongs to the CheD family.

The catalysed reaction is L-glutaminyl-[protein] + H2O = L-glutamyl-[protein] + NH4(+). Functionally, probably deamidates glutamine residues to glutamate on methyl-accepting chemotaxis receptors (MCPs), playing an important role in chemotaxis. The chain is Probable chemoreceptor glutamine deamidase CheD from Vibrio cholerae serotype O1 (strain ATCC 39315 / El Tor Inaba N16961).